The chain runs to 254 residues: 3-oxo-5-alpha-steroid 4-dehydrogenase 2 (254 aa).

4 consecutive transmembrane segments (helical) span residues 8 to 28 (SPVLAGSATLVALGALVLYVA), 72 to 92 (PLSLFGPPGTVLLGLFCVHYF), 146 to 166 (FCLGVFLFILGMGVNIHSDYI), and 206 to 226 (LATWSLPALAFAFFSVCFLGL).

It belongs to the steroid 5-alpha reductase family.

Its subcellular location is the microsome membrane. It localises to the endoplasmic reticulum membrane. It carries out the reaction a 3-oxo-5alpha-steroid + NADP(+) = a 3-oxo-Delta(4)-steroid + NADPH + H(+). It catalyses the reaction 17beta-hydroxy-5alpha-androstan-3-one + NADP(+) = testosterone + NADPH + H(+). The enzyme catalyses 5alpha-pregnane-3,20-dione + NADP(+) = progesterone + NADPH + H(+). In terms of biological role, converts testosterone (T) into 5-alpha-dihydrotestosterone (DHT) and progesterone or corticosterone into their corresponding 5-alpha-3-oxosteroids. It plays a central role in sexual differentiation and androgen physiology. This is 3-oxo-5-alpha-steroid 4-dehydrogenase 2 (SRD5A2) from Macaca fascicularis (Crab-eating macaque).